The sequence spans 302 residues: Bifunctional protein FolD (302 aa).

NADP(+)-binding positions include 168 to 170, Thr-197, and Val-238; that span reads GRS.

The protein belongs to the tetrahydrofolate dehydrogenase/cyclohydrolase family. As to quaternary structure, homodimer.

It carries out the reaction (6R)-5,10-methylene-5,6,7,8-tetrahydrofolate + NADP(+) = (6R)-5,10-methenyltetrahydrofolate + NADPH. The catalysed reaction is (6R)-5,10-methenyltetrahydrofolate + H2O = (6R)-10-formyltetrahydrofolate + H(+). Its pathway is one-carbon metabolism; tetrahydrofolate interconversion. Its function is as follows. Catalyzes the oxidation of 5,10-methylenetetrahydrofolate to 5,10-methenyltetrahydrofolate and then the hydrolysis of 5,10-methenyltetrahydrofolate to 10-formyltetrahydrofolate. The sequence is that of Bifunctional protein FolD from Desulfatibacillum aliphaticivorans.